The primary structure comprises 189 residues: UPF0312 protein VC0395_0473/VC395_A0785 (189 aa).

The N-terminal stretch at 1–22 is a signal peptide; it reads MKKTLMAVGLAAVISIPFAANA.

The protein belongs to the UPF0312 family. Type 1 subfamily.

It localises to the periplasm. This chain is UPF0312 protein VC0395_0473/VC395_A0785, found in Vibrio cholerae serotype O1 (strain ATCC 39541 / Classical Ogawa 395 / O395).